We begin with the raw amino-acid sequence, 221 residues long: Imidazole glycerol phosphate synthase subunit HisH (221 aa).

In terms of domain architecture, Glutamine amidotransferase type-1 spans 9–221; that stretch reads DVVIIDTGCA…QILGNFLKMQ (213 aa). C84 (nucleophile) is an active-site residue. Catalysis depends on residues H202 and E204.

Heterodimer of HisH and HisF.

Its subcellular location is the cytoplasm. It carries out the reaction 5-[(5-phospho-1-deoxy-D-ribulos-1-ylimino)methylamino]-1-(5-phospho-beta-D-ribosyl)imidazole-4-carboxamide + L-glutamine = D-erythro-1-(imidazol-4-yl)glycerol 3-phosphate + 5-amino-1-(5-phospho-beta-D-ribosyl)imidazole-4-carboxamide + L-glutamate + H(+). It catalyses the reaction L-glutamine + H2O = L-glutamate + NH4(+). Its pathway is amino-acid biosynthesis; L-histidine biosynthesis; L-histidine from 5-phospho-alpha-D-ribose 1-diphosphate: step 5/9. IGPS catalyzes the conversion of PRFAR and glutamine to IGP, AICAR and glutamate. The HisH subunit catalyzes the hydrolysis of glutamine to glutamate and ammonia as part of the synthesis of IGP and AICAR. The resulting ammonia molecule is channeled to the active site of HisF. The sequence is that of Imidazole glycerol phosphate synthase subunit HisH from Shewanella oneidensis (strain ATCC 700550 / JCM 31522 / CIP 106686 / LMG 19005 / NCIMB 14063 / MR-1).